The sequence spans 122 residues: Large ribosomal subunit protein uL18 (122 aa).

It belongs to the universal ribosomal protein uL18 family. As to quaternary structure, part of the 50S ribosomal subunit; part of the 5S rRNA/L5/L18/L25 subcomplex. Contacts the 5S and 23S rRNAs.

Functionally, this is one of the proteins that bind and probably mediate the attachment of the 5S RNA into the large ribosomal subunit, where it forms part of the central protuberance. This is Large ribosomal subunit protein uL18 from Desulfitobacterium hafniense (strain DSM 10664 / DCB-2).